We begin with the raw amino-acid sequence, 75 residues long: Putative membrane protein insertion efficiency factor (75 aa).

This sequence belongs to the UPF0161 family.

It is found in the cell membrane. In terms of biological role, could be involved in insertion of integral membrane proteins into the membrane. This is Putative membrane protein insertion efficiency factor from Bacillus velezensis (strain DSM 23117 / BGSC 10A6 / LMG 26770 / FZB42) (Bacillus amyloliquefaciens subsp. plantarum).